A 370-amino-acid chain; its full sequence is Proto-oncogene Wnt-1 (370 aa).

An N-terminal signal peptide occupies residues 1-27 (MGLWALLPSWVSTTLLLALTALPAALA). An N-linked (GlcNAc...) asparagine glycan is attached at Asn29. 11 cysteine pairs are disulfide-bonded: Cys93-Cys104, Cys143-Cys151, Cys153-Cys170, Cys218-Cys232, Cys220-Cys227, Cys299-Cys330, Cys315-Cys325, Cys329-Cys369, Cys345-Cys360, Cys347-Cys357, and Cys352-Cys353. Ser224 carries the O-palmitoleoyl serine; by PORCN lipid modification. N-linked (GlcNAc...) asparagine glycans are attached at residues Asn316 and Asn346. Asn359 carries N-linked (GlcNAc...) asparagine glycosylation.

The protein belongs to the Wnt family. As to quaternary structure, forms a soluble 1:1 complex with AFM; this prevents oligomerization and is required for prolonged biological activity. The complex with AFM may represent the physiological form in body fluids. Interacts with PORCN. Interacts with RSPO1, RSPO2 and RSPO3. Interacts with WLS. Palmitoleoylation is required for efficient binding to frizzled receptors. Palmitoleoylation is necessary for proper trafficking to cell surface. Depalmitoleoylated by NOTUM, leading to inhibit Wnt signaling pathway. As to expression, testis and mid-gestational embryos. In the testis, detected only in postmeiotic germ cells undergoing differentiation from round spermatids into mature spermatozoa. In the embryos, expression is restricted to the developing CNS in regions of the neural tube other than the telencephalon. Expressed in osteoblast; expression levels increase with advancing osteoblast differentiation. Expressed in the brain, femur, spleen, and hematopoietic bone marrow.

It localises to the secreted. The protein localises to the extracellular space. The protein resides in the extracellular matrix. In terms of biological role, ligand for members of the frizzled family of seven transmembrane receptors. Acts in the canonical Wnt signaling pathway by promoting beta-catenin-dependent transcriptional activation. In some developmental processes, is also a ligand for the coreceptor RYK, thus triggering Wnt signaling. Plays an essential role in the development of the embryonic brain and central nervous system (CNS). Has a role in osteoblast function, bone development and bone homeostasis. The sequence is that of Proto-oncogene Wnt-1 (Wnt1) from Mus musculus (Mouse).